A 92-amino-acid polypeptide reads, in one-letter code: Small ribosomal subunit protein uS19c (92 aa).

Belongs to the universal ribosomal protein uS19 family.

The protein localises to the plastid. In terms of biological role, protein S19 forms a complex with S13 that binds strongly to the 16S ribosomal RNA. The polypeptide is Small ribosomal subunit protein uS19c (Aneura mirabilis (Parasitic liverwort)).